A 473-amino-acid chain; its full sequence is Adenosylhomocysteinase (473 aa).

3 residues coordinate substrate: Thr64, Asp139, and Glu199. Thr200 to Thr202 is an NAD(+) binding site. The substrate site is built by Lys229 and Asp233. NAD(+) contacts are provided by residues Asn234, Gly263–Gly268, Glu286, Asn321, Ile342–His344, and Asn387.

The protein belongs to the adenosylhomocysteinase family. NAD(+) is required as a cofactor.

The protein localises to the cytoplasm. It carries out the reaction S-adenosyl-L-homocysteine + H2O = L-homocysteine + adenosine. Its pathway is amino-acid biosynthesis; L-homocysteine biosynthesis; L-homocysteine from S-adenosyl-L-homocysteine: step 1/1. Functionally, may play a key role in the regulation of the intracellular concentration of adenosylhomocysteine. This chain is Adenosylhomocysteinase, found in Paraburkholderia xenovorans (strain LB400).